The sequence spans 1530 residues: Neurexin-1 (1530 aa).

A signal peptide spans 1-30; the sequence is MGTALVQHGGCCLLCLSLLLLGCWAELGSG. In terms of domain architecture, Laminin G-like 1 spans 31 to 217; the sequence is LEFPGAEGQW…PPNSGGGSPC (187 aa). At 31–1454 the chain is on the extracellular side; the sequence is LEFPGAEGQW…EVIRESSSTT (1424 aa). Residues Asn-125 and Asn-190 are each glycosylated (N-linked (GlcNAc...) asparagine). Residues 196–219 form a disordered region; the sequence is PVDGSEVKLDEEPPNSGGGSPCEA. The EGF-like 1 domain maps to 213-255; it reads GGSPCEAGDEGDGGVCLNGGVCSVVDDQAVCDCSRTGFRGKDC. Intrachain disulfides connect Cys-228–Cys-243 and Cys-245–Cys-255. 2 Laminin G-like domains span residues 299–496 and 503–695; these read IATF…AFKC and DPIT…KPSC. Asp-345, Leu-362, and Met-430 together coordinate Ca(2+). Disulfide bonds link Cys-460–Cys-496, Cys-666–Cys-695, Cys-703–Cys-714, Cys-708–Cys-723, and Cys-725–Cys-735. One can recognise an EGF-like 2 domain in the interval 699-736; it reads TAKPCLSNPCKNNGMCRDGWNRYVCDCSGTGYLGRSCE. Laminin G-like domains follow at residues 741-914 and 928-1103; these read VLSY…IDYC and DPVT…ERGC. The Ca(2+) site is built by Asp-788 and Leu-805. Residue Asn-813 is glycosylated (N-linked (GlcNAc...) asparagine). Residue Arg-864 participates in Ca(2+) binding. 5 disulfides stabilise this stretch: Cys-906–Cys-914, Cys-1075–Cys-1103, Cys-1110–Cys-1121, Cys-1115–Cys-1130, and Cys-1132–Cys-1142. The region spanning 1106-1143 is the EGF-like 3 domain; the sequence is PSTTCQEDSCSNQGVCLQQWDGFSCDCSMTSFSGPLCN. A Laminin G-like 6 domain is found at 1149 to 1347; that stretch reads YIFSKGGGQI…DANIAIVGNV (199 aa). Residues Asp-1199 and Val-1216 each contribute to the Ca(2+) site. N-linked (GlcNAc...) asparagine glycosylation occurs at Asn-1246. Positions 1298 and 1300 each coordinate Ca(2+). Residue Ser-1408 is glycosylated (O-linked (Xyl...) (heparan sulfate) serine). Residues 1412 to 1443 form a disordered region; the sequence is PSDDEDIDPCEPSSGGLANPTRVGGREPYPGS. Residues 1455 to 1475 form a helical membrane-spanning segment; that stretch reads GMVVGIVAAAALCILILLYAM. At 1476-1530 the chain is on the cytoplasmic side; it reads YKYRNRDEGSYHVDESRNYISNSAQSNGAVVKEKQPSSAKSANKNKKNKDKEYYV. Residues 1497–1523 form an interaction with CASK region; it reads NSAQSNGAVVKEKQPSSAKSANKNKKN. The segment at 1497-1530 is disordered; that stretch reads NSAQSNGAVVKEKQPSSAKSANKNKKNKDKEYYV.

The protein belongs to the neurexin family. Interacts (via laminin G-like domain 2 and/or laminin G-like domain 6) with NLGN1 forming a heterotetramer, where one NLGN1 dimer interacts with one NRXN1 dimer. Also interacts (via laminin G-like domain 2 and/or laminin G-like domain 6) with NLGN2, NLGN3 and NLGN4L; interactions with NLGN1, NLGN2, NLGN3 and NLGN4L are calcium-dependent. Interacts (via cytoplasmic C-terminal region) with CASK (via the PDZ, SH3 and guanylate kinase-like domains). Interacts (via cytoplasmic C-terminus) with CASKIN1 and APBA1. Interacts (via laminin G-like domain 2) with NXPH1 and NXPH3. Alpha-type isoforms (neurexin-1-alpha) interact (via laminin G-like domain 2 and/or laminin G-like domain 6) with DAG1 (via alpha-dystroglycan chain). Interacts with LRRTM1, LRRTM2, LRRTM3 and LRRTM4. Interacts with SYT13 and SYTL1. Interacts with CBLN1, CBLN2 and, less avidly, with CBLN4. Interacts with CLSTN3. Alpha-type isoforms interact with alpha-latrotoxin from spider venom. Post-translationally, O-glycosylated; contains heparan sulfate. Heparan sulfate attachment is required for synapse development by mediating interactions with neuroligins and LRRTM2. Brain (neuronal synapse).

It localises to the presynaptic cell membrane. Functionally, cell surface protein involved in cell-cell-interactions, exocytosis of secretory granules and regulation of signal transmission. Function is isoform-specific. Alpha-type isoforms have a long N-terminus with six laminin G-like domains and play an important role in synaptic signal transmission. Alpha-type isoforms play a role in the regulation of calcium channel activity and Ca(2+)-triggered neurotransmitter release at synapses and at neuromuscular junctions. They play an important role in Ca(2+)-triggered exocytosis of secretory granules in pituitary gland. They may affect their functions at synapses and in endocrine cells via their interactions with proteins from the exocytotic machinery. Likewise, alpha-type isoforms play a role in regulating the activity of postsynaptic NMDA receptors, a subtype of glutamate-gated ion channels. Both alpha-type and beta-type isoforms may play a role in the formation or maintenance of synaptic junctions via their interactions (via the extracellular domains) with neuroligin family members, CBLN1 or CBLN2. In vitro, triggers the de novo formation of presynaptic structures. May be involved in specification of excitatory synapses. Alpha-type isoforms were first identified as receptors for alpha-latrotoxin from spider venom. The sequence is that of Neurexin-1 (Nrxn1) from Rattus norvegicus (Rat).